A 304-amino-acid chain; its full sequence is 33 kDa chaperonin (304 aa).

2 disulfide bridges follow: Cys236-Cys238 and Cys269-Cys272.

It belongs to the HSP33 family. In terms of processing, under oxidizing conditions two disulfide bonds are formed involving the reactive cysteines. Under reducing conditions zinc is bound to the reactive cysteines and the protein is inactive.

The protein resides in the cytoplasm. Its function is as follows. Redox regulated molecular chaperone. Protects both thermally unfolding and oxidatively damaged proteins from irreversible aggregation. Plays an important role in the bacterial defense system toward oxidative stress. This Pelobacter propionicus (strain DSM 2379 / NBRC 103807 / OttBd1) protein is 33 kDa chaperonin.